A 460-amino-acid polypeptide reads, in one-letter code: tRNA-2-methylthio-N(6)-dimethylallyladenosine synthase (460 aa).

The 117-residue stretch at glycine 10–serine 126 folds into the MTTase N-terminal domain. Cysteine 19, cysteine 55, cysteine 89, cysteine 161, cysteine 165, and cysteine 168 together coordinate [4Fe-4S] cluster. In terms of domain architecture, Radical SAM core spans arginine 147 to glutamate 384. Residues alanine 387–proline 455 enclose the TRAM domain.

It belongs to the methylthiotransferase family. MiaB subfamily. As to quaternary structure, monomer. [4Fe-4S] cluster serves as cofactor.

It is found in the cytoplasm. The catalysed reaction is N(6)-dimethylallyladenosine(37) in tRNA + (sulfur carrier)-SH + AH2 + 2 S-adenosyl-L-methionine = 2-methylsulfanyl-N(6)-dimethylallyladenosine(37) in tRNA + (sulfur carrier)-H + 5'-deoxyadenosine + L-methionine + A + S-adenosyl-L-homocysteine + 2 H(+). Its function is as follows. Catalyzes the methylthiolation of N6-(dimethylallyl)adenosine (i(6)A), leading to the formation of 2-methylthio-N6-(dimethylallyl)adenosine (ms(2)i(6)A) at position 37 in tRNAs that read codons beginning with uridine. This is tRNA-2-methylthio-N(6)-dimethylallyladenosine synthase from Parasynechococcus marenigrum (strain WH8102).